Reading from the N-terminus, the 304-residue chain is Cyclin-dependent kinase 3 (304 aa).

The Protein kinase domain occupies 4-286; it reads FQKVEKIGEG…AKTALAHPYF (283 aa). ATP-binding positions include 10 to 18 and Lys-33; that span reads IGEGTYGVV. Residue Asp-127 is the Proton acceptor of the active site.

This sequence belongs to the protein kinase superfamily. CMGC Ser/Thr protein kinase family. CDC2/CDKX subfamily. As to quaternary structure, interacts with CABLES1 and ATF1. Binding to CCNC/cyclin-C promotes RB1 phosphorylation. Binds to CABLES2.

The enzyme catalyses L-seryl-[protein] + ATP = O-phospho-L-seryl-[protein] + ADP + H(+). It carries out the reaction L-threonyl-[protein] + ATP = O-phospho-L-threonyl-[protein] + ADP + H(+). Serine/threonine-protein kinase that plays a critical role in the control of the eukaryotic cell cycle; involved in G0-G1 and G1-S cell cycle transitions. Interacts with CCNC/cyclin-C during interphase. Phosphorylates histone H1, ATF1, RB1 and CABLES1. ATF1 phosphorylation triggers ATF1 transactivation and transcriptional activities, and promotes cell proliferation and transformation. CDK3/cyclin-C mediated RB1 phosphorylation is required for G0-G1 transition. Promotes G1-S transition probably by contributing to the activation of E2F1, E2F2 and E2F3 in a RB1-independent manner. This chain is Cyclin-dependent kinase 3 (Cdk3), found in Mus musculus (Mouse).